Here is a 136-residue protein sequence, read N- to C-terminus: ATP synthase epsilon chain (136 aa).

The segment at 106–136 (MEGQPSSPEKLKAQQQLNEARARLQASKTAD) is disordered.

The protein belongs to the ATPase epsilon chain family. F-type ATPases have 2 components, CF(1) - the catalytic core - and CF(0) - the membrane proton channel. CF(1) has five subunits: alpha(3), beta(3), gamma(1), delta(1), epsilon(1). CF(0) has three main subunits: a, b and c.

It localises to the cellular thylakoid membrane. Produces ATP from ADP in the presence of a proton gradient across the membrane. The protein is ATP synthase epsilon chain of Synechococcus sp. (strain CC9605).